Consider the following 547-residue polypeptide: Elongator complex protein 3 (547 aa).

The region spanning 82-372 (RTASGIAVVA…YRVQRDIPMP (291 aa)) is the Radical SAM core domain. [4Fe-4S] cluster-binding residues include C99, C109, and C112. S161 is modified (phosphoserine). K164 is a binding site for acetyl-CoA. A Phosphotyrosine modification is found at Y202. K229 carries the post-translational modification N6-methyllysine. Position 251 is a phosphotyrosine (Y251). The N-acetyltransferase domain occupies 396–547 (IQCRDVRTRE…QGPYMVKTLE (152 aa)). Acetyl-CoA contacts are provided by residues 474 to 477 (ELHV), 497 to 499 (FGM), and Y530.

This sequence belongs to the ELP3 family. Component of the elongator complex which consists of ELP1, ELP2, ELP3, ELP4, ELP5 and ELP6. ELP1, ELP2 and ELP3 form the elongator core complex. Interacts with alpha-tubulin. [4Fe-4S] cluster serves as cofactor. Tyrosine-phosphorylated; phosphorylation on Tyr-202 does not affect elongator complex integrity or ELP3 protein stability. Also serine/threonine-phosphorylated.

The protein localises to the cytoplasm. The protein resides in the nucleus. It carries out the reaction uridine(34) in tRNA + acetyl-CoA + S-adenosyl-L-methionine + H2O = 5-(carboxymethyl)uridine(34) in tRNA + 5'-deoxyadenosine + L-methionine + CoA + 2 H(+). Its pathway is tRNA modification; 5-methoxycarbonylmethyl-2-thiouridine-tRNA biosynthesis. Catalytic tRNA acetyltransferase subunit of the elongator complex which is required for multiple tRNA modifications, including mcm5U (5-methoxycarbonylmethyl uridine), mcm5s2U (5-methoxycarbonylmethyl-2-thiouridine), and ncm5U (5-carbamoylmethyl uridine). In the elongator complex, acts as a tRNA uridine(34) acetyltransferase by mediating formation of carboxymethyluridine in the wobble base at position 34 in tRNAs. May also act as a protein lysine acetyltransferase by mediating acetylation of target proteins; such activity is however unclear in vivo and recent evidences suggest that ELP3 primarily acts as a tRNA acetyltransferase. Involved in neurogenesis: regulates the migration and branching of projection neurons in the developing cerebral cortex, through a process depending on alpha-tubulin acetylation. Required for acetylation of GJA1 in the developing cerebral cortex. This is Elongator complex protein 3 from Bos taurus (Bovine).